The following is a 96-amino-acid chain: UPF0235 protein Tola_0962 (96 aa).

The protein belongs to the UPF0235 family.

The protein is UPF0235 protein Tola_0962 of Tolumonas auensis (strain DSM 9187 / NBRC 110442 / TA 4).